The sequence spans 334 residues: Myo-inositol 2-dehydrogenase (334 aa).

The protein belongs to the Gfo/Idh/MocA family.

The catalysed reaction is myo-inositol + NAD(+) = scyllo-inosose + NADH + H(+). Its pathway is polyol metabolism; myo-inositol metabolism. Functionally, catalyzes the NAD(+)-dependent oxidation of myo-inositol (MI) to 2-keto-myo-inositol (scyllo-inosose), and thus probably functions in a myo-inositol degradation pathway together with IolM, IolN and IolO. Has no activity with scyllo-inositol and much reduced activity (78-fold lower catalytic efficiency) with 1D-chiro-inositol. This chain is Myo-inositol 2-dehydrogenase, found in Thermotoga maritima (strain ATCC 43589 / DSM 3109 / JCM 10099 / NBRC 100826 / MSB8).